The chain runs to 858 residues: MENITPLRKQYLDIKKNYPEAIVFFRLGDFYETFEEDARIAARELEIVLTSREMGKGLKVPLAGIPYHALDNYLSRLINRGYKVAICEQVTKPGETKGLVKRQVTRLVTPGTVVEPNLLDSKQNNFLLSLYLTEDSCGLAFADISTSEFGCTQLDINGLEAEINRLNPAEIILPKSQSLNLPLHLKATISKLDGYYFEADVARERLLKHFECQNLSAYGCENLPLAVSAAGALLNYLEETQKSSLKQLERLAAYTISDYMQIDSHTLSNLEIFRSSGGNSLKGSLLGVLDQTKTAMGGRLLRKFLGQPLLRQEDIEKRLSAVDYFFEESLARASLAKALGQIADMERIANRIRQKTILPKELISLKNSLETVSAIHRQFGLMPPPRLAYFLNGLKPLPEMLDIVNEAINDDPPSTLGEGKVIRSGFNPEMDKLCSLAGDARTFLSQMEAREREQTGIKSLKLGYNRVFGYYIEVSNANLADIPQNYIRKQTLVNAERFITPELKEYENLILNAKERLLEMETGLYEQVLNQLGGFYSALLSNAAALASLDVLSAFAEVAVRNGYVRPLFHSENSLVIHRGRHPMVEQGLGYGSFAANDISLSAEDCQIIILTGPNMAGKSTYLKQTALIVLMAQIGSYVPAETAELCLTDRIFSRIGAREDLSAGQSTFMVEMVETASILNTATSRSLLILDEIGRGTSTYDGLAIAQAVVEYIHSQPSLHAKTLFATHYHELVELANYLPRVKNYNIAVSEDRGEVVFLHRIVPGGVDKSYGIHVAKLAGLPGWVIKRAYEVLTELENPAKKEPKIRNCQPQLLLPLTEQTSALAEEIKGLEIESLTPLAALNKLYELKKKAEEQGL.

G613–S620 is an ATP binding site.

Belongs to the DNA mismatch repair MutS family.

In terms of biological role, this protein is involved in the repair of mismatches in DNA. It is possible that it carries out the mismatch recognition step. This protein has a weak ATPase activity. In Dehalococcoides mccartyi (strain ATCC BAA-2266 / KCTC 15142 / 195) (Dehalococcoides ethenogenes (strain 195)), this protein is DNA mismatch repair protein MutS.